The following is a 387-amino-acid chain: Succinate--CoA ligase [ADP-forming] subunit beta (387 aa).

The ATP-grasp domain occupies 9-236 (RDLFESYGVP…AAAADPLEAK (228 aa)). Residues lysine 45, 52–54 (GRG), alanine 94, and glutamate 99 contribute to the ATP site. Mg(2+) contacts are provided by asparagine 191 and aspartate 205. Substrate-binding positions include asparagine 256 and 318-320 (GIT).

The protein belongs to the succinate/malate CoA ligase beta subunit family. As to quaternary structure, heterotetramer of two alpha and two beta subunits. It depends on Mg(2+) as a cofactor.

It catalyses the reaction succinate + ATP + CoA = succinyl-CoA + ADP + phosphate. It carries out the reaction GTP + succinate + CoA = succinyl-CoA + GDP + phosphate. It participates in carbohydrate metabolism; tricarboxylic acid cycle; succinate from succinyl-CoA (ligase route): step 1/1. Its function is as follows. Succinyl-CoA synthetase functions in the citric acid cycle (TCA), coupling the hydrolysis of succinyl-CoA to the synthesis of either ATP or GTP and thus represents the only step of substrate-level phosphorylation in the TCA. The beta subunit provides nucleotide specificity of the enzyme and binds the substrate succinate, while the binding sites for coenzyme A and phosphate are found in the alpha subunit. The protein is Succinate--CoA ligase [ADP-forming] subunit beta of Clavibacter michiganensis subsp. michiganensis (strain NCPPB 382).